A 257-amino-acid polypeptide reads, in one-letter code: Hydroxyacylglutathione hydrolase (257 aa).

7 residues coordinate Zn(2+): His53, His55, Asp57, His58, His109, Asp126, and His164.

The protein belongs to the metallo-beta-lactamase superfamily. Glyoxalase II family. Monomer. The cofactor is Zn(2+).

It carries out the reaction an S-(2-hydroxyacyl)glutathione + H2O = a 2-hydroxy carboxylate + glutathione + H(+). It participates in secondary metabolite metabolism; methylglyoxal degradation; (R)-lactate from methylglyoxal: step 2/2. Functionally, thiolesterase that catalyzes the hydrolysis of S-D-lactoyl-glutathione to form glutathione and D-lactic acid. The sequence is that of Hydroxyacylglutathione hydrolase from Baumannia cicadellinicola subsp. Homalodisca coagulata.